Here is a 577-residue protein sequence, read N- to C-terminus: Proline--tRNA ligase (577 aa).

The protein belongs to the class-II aminoacyl-tRNA synthetase family. ProS type 1 subfamily. In terms of assembly, homodimer.

It localises to the cytoplasm. The enzyme catalyses tRNA(Pro) + L-proline + ATP = L-prolyl-tRNA(Pro) + AMP + diphosphate. Catalyzes the attachment of proline to tRNA(Pro) in a two-step reaction: proline is first activated by ATP to form Pro-AMP and then transferred to the acceptor end of tRNA(Pro). As ProRS can inadvertently accommodate and process non-cognate amino acids such as alanine and cysteine, to avoid such errors it has two additional distinct editing activities against alanine. One activity is designated as 'pretransfer' editing and involves the tRNA(Pro)-independent hydrolysis of activated Ala-AMP. The other activity is designated 'posttransfer' editing and involves deacylation of mischarged Ala-tRNA(Pro). The misacylated Cys-tRNA(Pro) is not edited by ProRS. The chain is Proline--tRNA ligase from Janthinobacterium sp. (strain Marseille) (Minibacterium massiliensis).